The chain runs to 269 residues: uncharacterized protein (269 aa).

4 consecutive transmembrane segments (helical) span residues 64–84, 125–145, 169–189, and 230–250; these read FVYF…LAGV, YGIA…FLSF, FFIS…FLVL, and VFAT…IAIF.

The protein resides in the cell membrane. This is an uncharacterized protein from Mycoplasma genitalium (strain ATCC 33530 / DSM 19775 / NCTC 10195 / G37) (Mycoplasmoides genitalium).